Consider the following 247-residue polypeptide: Small ribosomal subunit protein uS2 (247 aa).

This sequence belongs to the universal ribosomal protein uS2 family.

The polypeptide is Small ribosomal subunit protein uS2 (Fusobacterium nucleatum subsp. nucleatum (strain ATCC 25586 / DSM 15643 / BCRC 10681 / CIP 101130 / JCM 8532 / KCTC 2640 / LMG 13131 / VPI 4355)).